Reading from the N-terminus, the 207-residue chain is Thiamine-phosphate synthase (207 aa).

4-amino-2-methyl-5-(diphosphooxymethyl)pyrimidine-binding positions include 41 to 45 (QLRLK) and asparagine 73. Mg(2+)-binding residues include aspartate 74 and aspartate 93. Residue threonine 111 participates in 4-amino-2-methyl-5-(diphosphooxymethyl)pyrimidine binding. 2-[(2R,5Z)-2-carboxy-4-methylthiazol-5(2H)-ylidene]ethyl phosphate is bound at residue 138-140 (TKT). Lysine 141 contacts 4-amino-2-methyl-5-(diphosphooxymethyl)pyrimidine. Glycine 168 lines the 2-[(2R,5Z)-2-carboxy-4-methylthiazol-5(2H)-ylidene]ethyl phosphate pocket.

It belongs to the thiamine-phosphate synthase family. Mg(2+) serves as cofactor.

It catalyses the reaction 2-[(2R,5Z)-2-carboxy-4-methylthiazol-5(2H)-ylidene]ethyl phosphate + 4-amino-2-methyl-5-(diphosphooxymethyl)pyrimidine + 2 H(+) = thiamine phosphate + CO2 + diphosphate. The enzyme catalyses 2-(2-carboxy-4-methylthiazol-5-yl)ethyl phosphate + 4-amino-2-methyl-5-(diphosphooxymethyl)pyrimidine + 2 H(+) = thiamine phosphate + CO2 + diphosphate. The catalysed reaction is 4-methyl-5-(2-phosphooxyethyl)-thiazole + 4-amino-2-methyl-5-(diphosphooxymethyl)pyrimidine + H(+) = thiamine phosphate + diphosphate. It functions in the pathway cofactor biosynthesis; thiamine diphosphate biosynthesis; thiamine phosphate from 4-amino-2-methyl-5-diphosphomethylpyrimidine and 4-methyl-5-(2-phosphoethyl)-thiazole: step 1/1. Its function is as follows. Condenses 4-methyl-5-(beta-hydroxyethyl)thiazole monophosphate (THZ-P) and 2-methyl-4-amino-5-hydroxymethyl pyrimidine pyrophosphate (HMP-PP) to form thiamine monophosphate (TMP). The polypeptide is Thiamine-phosphate synthase (Pelagibacter ubique (strain HTCC1062)).